Consider the following 243-residue polypeptide: MSASPLDQFKILTIFKLPNIAGYNIDFTNASLFMVLSTISVALFCYIGLKKESIIPNGIQSIVEFIYEFIVSTIESNVGKEGLQYIPLVFTIFMFIATCNLLGILPLGFTATSHIAVTFAISMVVFVSVTIIGFKHQGIHFLRILLPQGTPGWLAPMMVFIELFAYCARPVSLSIRLAANMIAGHTIIKVIAGFVVKMNIFLTPLPMIFIIILIGFEIFVAILQAYIFTVLTCVYLSDAVKEH.

The next 7 helical transmembrane spans lie at 29–49 (NASL…YIGL), 54–74 (IIPN…VSTI), 89–109 (VFTI…PLGF), 114–134 (HIAV…IIGF), 144–164 (ILLP…IELF), 182–202 (IAGH…NIFL), and 208–228 (IFII…AYIF).

Belongs to the ATPase A chain family. F-type ATPases have 2 components, CF(1) - the catalytic core - and CF(0) - the membrane proton channel. CF(1) has five subunits: alpha(3), beta(3), gamma(1), delta(1), epsilon(1). CF(0) has three main subunits: a(1), b(2) and c(9-12). The alpha and beta chains form an alternating ring which encloses part of the gamma chain. CF(1) is attached to CF(0) by a central stalk formed by the gamma and epsilon chains, while a peripheral stalk is formed by the delta and b chains.

It localises to the cell inner membrane. In terms of biological role, key component of the proton channel; it plays a direct role in the translocation of protons across the membrane. This chain is ATP synthase subunit a, found in Ehrlichia canis (strain Jake).